A 499-amino-acid chain; its full sequence is Endosomal/lysosomal proton channel TMEM175 (499 aa).

Residues 1–10 (MSRLQVQEQA) show a composition bias toward polar residues. Residues 1 to 26 (MSRLQVQEQAVDSEGDSSLYRRDEEG) form a disordered region. Residues 1-30 (MSRLQVQEQAVDSEGDSSLYRRDEEGTQSS) lie on the Cytoplasmic side of the membrane. Residues 31-53 (HRMLGFSDALLSIIATVMILPVT) form a helical membrane-spanning segment. The RxxxFSD motif 1 motif lies at 32–38 (RMLGFSD). Over 54–74 (HTEISPEQQFDKSIQKLLATR) the chain is Lumenal. A short helix H1-1 region spans residues 55-60 (TEISPE). The short helix H2-1 stretch occupies residues 62-68 (QFDKSIQ). Residues 75 to 97 (IAVYLMTFLIVTVAWAAHTRLFQ) traverse the membrane as a helical segment. Residues 98–103 (VVGKID) lie on the Cytoplasmic side of the membrane. The chain crosses the membrane as a helical span at residues 104-125 (DTLALLNLACMMTITLLPYTFS). Residues 126-135 (LMVTFPDVPL) lie on the Lumenal side of the membrane. A helical membrane pass occupies residues 136–157 (GIFLFCMCVIAIGSVQAMIVGY). Residues 158–181 (AFHFPHLLNPQIQCSTHRALSRRH) lie on the Cytoplasmic side of the membrane. A helical transmembrane segment spans residues 182-202 (ILHLVLRGPALCFVAAVFSLF). The Lumenal portion of the chain corresponds to 203–207 (FFPLS). A helical membrane pass occupies residues 208-227 (YLLMVTVIFLPHISKATTWC). Residues 228-254 (KDKFMGHRESPAHNVEPFSIDLHAPLS) lie on the Cytoplasmic side of the membrane. A helical membrane pass occupies residues 255 to 279 (KERVEAFSDGVYAIVATLLILDICE). The RxxxFSD motif 2 motif lies at 257–263 (RVEAFSD). The Lumenal segment spans residues 280–306 (DNVPDPKDVQQKFSGSLVAALGAYGPQ). The short helix H1-2 stretch occupies residues 285–293 (PKDVQQKFS). Residues 295-301 (SLVAALG) form a short helix H2-2 region. Residues 307–329 (FLAYFGSFATVGLLWFAHHSLFL) traverse the membrane as a helical segment. The Cytoplasmic segment spans residues 330–335 (HVRKAT). A helical transmembrane segment spans residues 336–357 (QTMGLFNILSLAFVGGLPLAYQ). Residues 358-372 (QTSAFARQPRDELER) are Lumenal-facing. A helical transmembrane segment spans residues 373–393 (VRVSCAIIFFASIFQFAIWTT). The Cytoplasmic segment spans residues 394-413 (ALLHQRETLQPAVQFGGQEH). Residues 414 to 437 (AFMFAKLALYPCASLLAFAATCLL) traverse the membrane as a helical segment. Over 438–439 (SR) the chain is Lumenal. Residues 440–466 (FSTAIFHLMQIAVPFAFLLLRLLVRLA) form a helical membrane-spanning segment. Topologically, residues 467 to 499 (LAGLQVLWDLWPERPQQDQGEPETQSQLLPASC) are cytoplasmic.

The protein belongs to the TMEM175 family. In terms of assembly, homodimer. Interacts with AKT (AKT1, AKT2 or AKT3); leading to formation of the lysoK(GF) complex, which activates the channel. Interacts with LAMP1; inhibiting the proton channel activity of TMEM175. Interacts with LAMP2; inhibiting the proton channel activity of TMEM175.

The protein localises to the endosome membrane. The protein resides in the lysosome membrane. It carries out the reaction H(+)(in) = H(+)(out). The enzyme catalyses K(+)(in) = K(+)(out). Active at low pH (under pH 4.6): proton channel activity is activated by luminal side protons. Polyunsaturated fatty acids, such as arachidonic acid, also activate the channel activity. Proton channel activity is directly inhibited by LAMP1 or LAMP2, facilitating lysosomal acidification. Channel activity is activated following interaction with AKT (AKT1, AKT2 or AKT3): interaction promotes activation from closed to an open state. Activation by AKT is independent of AKT serine/threonine-protein kinase activity. Functionally, proton-activated proton channel that catalyzes proton efflux from endosomes and lysosomes to maintain a steady-state pH. Activated at low pH (under pH 4.6) by luminal side protons: selectively mediates lysosomal proton release from lysosomes, eliciting a proton leak that balances V-ATPase activity to maintain pH homeostasis. Regulation of lumenal pH stability is required for autophagosome-lysosome fusion. Also acts as a potassium channel at higher pH, regulating potassium conductance in endosomes and lysosomes. Constitutes the pore-forming subunit of the lysoK(GF) complex, a complex activated by extracellular growth factors. The lysoK(GF) complex is composed of TMEM175 and AKT (AKT1, AKT2 or AKT3), a major target of growth factor receptors: in the complex, TMEM175 channel is opened by conformational changes by AKT, leading to its activation. The lysoK(GF) complex is required to protect neurons against stress-induced damage. In Rattus norvegicus (Rat), this protein is Endosomal/lysosomal proton channel TMEM175.